The chain runs to 245 residues: 3-deoxy-manno-octulosonate cytidylyltransferase (245 aa).

It belongs to the KdsB family.

The protein resides in the cytoplasm. The enzyme catalyses 3-deoxy-alpha-D-manno-oct-2-ulosonate + CTP = CMP-3-deoxy-beta-D-manno-octulosonate + diphosphate. Its pathway is nucleotide-sugar biosynthesis; CMP-3-deoxy-D-manno-octulosonate biosynthesis; CMP-3-deoxy-D-manno-octulosonate from 3-deoxy-D-manno-octulosonate and CTP: step 1/1. It participates in bacterial outer membrane biogenesis; lipopolysaccharide biosynthesis. In terms of biological role, activates KDO (a required 8-carbon sugar) for incorporation into bacterial lipopolysaccharide in Gram-negative bacteria. The sequence is that of 3-deoxy-manno-octulosonate cytidylyltransferase from Rhodopseudomonas palustris (strain BisB5).